The following is a 295-amino-acid chain: Universal stress protein Mb2028c (295 aa).

Residues Gly-13, 117-123 (GSSGRGA), 131-132 (SV), Gly-165, Asp-198, 262-268 (GSHGRGG), and 276-278 (SVS) contribute to the ATP site.

The protein belongs to the universal stress protein A family.

In Mycobacterium bovis (strain ATCC BAA-935 / AF2122/97), this protein is Universal stress protein Mb2028c.